The sequence spans 28 residues: Truncated protein OPG079 (28 aa).

It belongs to the orthopoxvirus OPG079 family. In terms of assembly, homoomultimer (Potential). Interacts with the small subunit of ribonucleotide reductase. Interacts with host FAM111A; this interaction protomtes OPG079 degradation through autophagy.

It is found in the host cytoplasm. Its function is as follows. Plays an essential role in viral DNA replication. Binds to ssDNA with high affinity and localizes to cytoplasmic factories where nascent viral genomes accumulate. May disrupt loops, hairpins and other secondary structures present on ssDNA to reduce and eliminate pausing of viral DNA polymerase at specific sites during elongation. This Vaccinia virus (strain L-IVP) (VACV) protein is Truncated protein OPG079 (OPG079).